Consider the following 161-residue polypeptide: Small ribosomal subunit protein uS19 (161 aa).

A compositionally biased stretch (basic residues) spans Met-1 to Gln-19. Residues Met-1–Arg-26 are disordered.

It belongs to the universal ribosomal protein uS19 family.

Functionally, protein S19 forms a complex with S13 that binds strongly to the 16S ribosomal RNA. The polypeptide is Small ribosomal subunit protein uS19 (Methanococcus maripaludis (strain C7 / ATCC BAA-1331)).